Reading from the N-terminus, the 152-residue chain is 3-hydroxyacyl-[acyl-carrier-protein] dehydratase FabZ (152 aa).

Residue histidine 58 is part of the active site.

This sequence belongs to the thioester dehydratase family. FabZ subfamily.

It is found in the cytoplasm. The enzyme catalyses a (3R)-hydroxyacyl-[ACP] = a (2E)-enoyl-[ACP] + H2O. In terms of biological role, involved in unsaturated fatty acids biosynthesis. Catalyzes the dehydration of short chain beta-hydroxyacyl-ACPs and long chain saturated and unsaturated beta-hydroxyacyl-ACPs. In Prochlorococcus marinus (strain MIT 9301), this protein is 3-hydroxyacyl-[acyl-carrier-protein] dehydratase FabZ.